The following is a 494-amino-acid chain: Alpha-amylase-related protein (494 aa).

The first 20 residues, Met-1–Ala-20, serve as a signal peptide directing secretion. Gln-21 is subject to Pyrrolidone carboxylic acid. Cys-48 and Cys-104 form a disulfide bridge. Ca(2+) contacts are provided by Asn-118, Gln-169, and Asp-178. A disulfide bridge connects residues Cys-157 and Cys-171. Arg-206 provides a ligand contact to chloride. Asp-208 acts as the Nucleophile in catalysis. Ca(2+) is bound at residue His-212. The active-site Proton donor is the Glu-245. Chloride-binding residues include Asn-308 and Arg-343. 3 disulfides stabilise this stretch: Cys-376-Cys-382, Cys-418-Cys-441, and Cys-448-Cys-460.

The protein belongs to the glycosyl hydrolase 13 family. In terms of assembly, monomer. It depends on Ca(2+) as a cofactor. Chloride is required as a cofactor.

Its subcellular location is the secreted. The enzyme catalyses Endohydrolysis of (1-&gt;4)-alpha-D-glucosidic linkages in polysaccharides containing three or more (1-&gt;4)-alpha-linked D-glucose units.. The chain is Alpha-amylase-related protein (Amyrel) from Drosophila atripex (Fruit fly).